Reading from the N-terminus, the 131-residue chain is Small ribosomal subunit protein uS8 (131 aa).

The protein belongs to the universal ribosomal protein uS8 family. Part of the 30S ribosomal subunit. Contacts proteins S5 and S12.

One of the primary rRNA binding proteins, it binds directly to 16S rRNA central domain where it helps coordinate assembly of the platform of the 30S subunit. The polypeptide is Small ribosomal subunit protein uS8 (Dictyoglomus thermophilum (strain ATCC 35947 / DSM 3960 / H-6-12)).